The following is a 1405-amino-acid chain: Rho guanine nucleotide exchange factor 18 (1405 aa).

Disordered stretches follow at residues 1-47, 92-115, and 289-330; these read MGSE…EDGF, ETHRQEARRESSHTSCEGASALPQ, and PGKS…PGKR. Basic and acidic residues-rich tracts occupy residues 92-103 and 308-330; these read ETHRQEARRESS and RQKEKGKSPAHLKDKTQDLPGKR. A C2H2-type; degenerate zinc finger spans residues 347–372; sequence SSCPLCGEPLLNSASLKEHPRTTLLS. Residues 485–682 enclose the DH domain; it reads KRQDVLYELM…KDIISQVDAK (198 aa). Positions 723-825 constitute a PH domain; it reads QLHLEGALCW…WMAHIRRAVE (103 aa). Residues 936–1016 are disordered; that stretch reads QVEEGSVSAG…PQAVEMPSTE (81 aa). The residue at position 952 (Thr952) is a Phosphothreonine. Residue Ser961 is modified to Phosphoserine. The stretch at 1084–1181 forms a coiled coil; that stretch reads FEKQREERAG…RERLELLRRF (98 aa). Disordered stretches follow at residues 1198–1242, 1274–1309, and 1328–1405; these read EAQP…VERP, RQTAVQQQIPTKLAASTKGGKEKGSKSRGSQRWESS, and ESAS…VIFF. 2 positions are modified to phosphoserine: Ser1336 and Ser1338. The segment covering 1355–1365 has biased composition (pro residues); it reads FPAPSPAPAAT. Residues 1375–1394 show a composition bias toward low complexity; sequence TSLPPVSPASSLPTTPLATT. Residues 1396 to 1405 show a composition bias toward basic and acidic residues; that stretch reads EVSKEDVIFF.

In terms of assembly, interacts with SEPT9; interaction may inhibit GEF activity. Interacts with Gbetagamma subunits GNB1 and GNG2. Interacts with EPB41L4B. Interacts with PATJ (via C-terminus).

It localises to the cytoplasm. It is found in the cytoskeleton. Its subcellular location is the cell membrane. The protein localises to the apical cell membrane. Acts as a guanine nucleotide exchange factor (GEF) for RhoA GTPases. May play a role in actin cytoskeleton reorganization in different tissues since its activation induces formation of actin stress fibers. Also acts as a GEF for RAC1, inducing production of reactive oxygen species (ROS). Does not act as a GEF for CDC42. The G protein beta-gamma (Gbetagamma) subunits of heterotrimeric G proteins act as activators, explaining the integrated effects of LPA and other G-protein coupled receptor agonists on actin stress fiber formation, cell shape change and ROS production. Required for EPB41L4B-mediated regulation of the circumferential actomyosin belt in epithelial cells. This chain is Rho guanine nucleotide exchange factor 18 (Arhgef18), found in Mus musculus (Mouse).